A 55-amino-acid polypeptide reads, in one-letter code: A-type ATP synthase subunit G (55 aa).

Has multiple subunits, A(3), B(3), C, D, E, F, G, I and K(x); there may be a few other subunits as well.

It localises to the cell membrane. In terms of biological role, component of the A-type ATP synthase that produces ATP from ADP in the presence of a proton gradient across the membrane. This chain is A-type ATP synthase subunit G (atpG), found in Methanosarcina mazei (strain ATCC BAA-159 / DSM 3647 / Goe1 / Go1 / JCM 11833 / OCM 88) (Methanosarcina frisia).